We begin with the raw amino-acid sequence, 88 residues long: Small ribosomal subunit protein uS15 (88 aa).

The protein belongs to the universal ribosomal protein uS15 family. Part of the 30S ribosomal subunit. Forms a bridge to the 50S subunit in the 70S ribosome, contacting the 23S rRNA.

In terms of biological role, one of the primary rRNA binding proteins, it binds directly to 16S rRNA where it helps nucleate assembly of the platform of the 30S subunit by binding and bridging several RNA helices of the 16S rRNA. Its function is as follows. Forms an intersubunit bridge (bridge B4) with the 23S rRNA of the 50S subunit in the ribosome. The protein is Small ribosomal subunit protein uS15 of Mesomycoplasma flocculare (Mycoplasma flocculare).